The primary structure comprises 376 residues: Dihydroorotate dehydrogenase (quinone) (376 aa).

Residues 74–78 (AGFDK) and T98 each bind FMN. K78 is a binding site for substrate. 123–127 (NHMGF) serves as a coordination point for substrate. Positions 152 and 185 each coordinate FMN. N185 contributes to the substrate binding site. S188 acts as the Nucleophile in catalysis. N190 lines the substrate pocket. FMN is bound by residues K223 and T251. 252–253 (NT) contributes to the substrate binding site. FMN contacts are provided by residues G280, G309, and 330–331 (YT). The disordered stretch occupies residues 352–376 (RNPAPSSPERMPTGIQSGRKIVMDP).

Belongs to the dihydroorotate dehydrogenase family. Type 2 subfamily. In terms of assembly, monomer. Requires FMN as cofactor.

It is found in the cell membrane. The enzyme catalyses (S)-dihydroorotate + a quinone = orotate + a quinol. It functions in the pathway pyrimidine metabolism; UMP biosynthesis via de novo pathway; orotate from (S)-dihydroorotate (quinone route): step 1/1. Catalyzes the conversion of dihydroorotate to orotate with quinone as electron acceptor. This Synechococcus sp. (strain JA-3-3Ab) (Cyanobacteria bacterium Yellowstone A-Prime) protein is Dihydroorotate dehydrogenase (quinone).